Reading from the N-terminus, the 525-residue chain is MAAVEQVSSVFDTILVLDFGSQYSHLITRRLREFNVYAEMLPCTQKISELGWKPKGVILSGGPYSVYAADAPHVDRAVFELGVPILGICYGLQELAWIAGAEVGRGEKREYGRATLHVEDSACPLFNNVDSSTVWMSHGDKLHALPADFHVTATTENSPFCGIAHDSKPIFGIQFHPEVTHSSQGKTLLKNFAVEICQAAQTWTMENFIDTEIQRIRTLVGPTAEVIGAVSGGVDSTVAAKLMTEAIGDRFHAILVDNGVLRLNEAANVKKILGEGLGINLTVVDASEEFLTKLKGVTDPEKKRKIIGNTFIHVFEREAARIQPKNGEEIEFLLQGTLYPDVIESISFKGPSQTIKTHHNVGGLLDNMKLKLIEPLRELFKDEVRHLGELLGISHELVWRHPFPGPGIAIRVLGEVTKEQVEIARKADHIYIEEIRKAGLYNKISQAFACLLPVKSVGVMGDQRTYDQVIALRAIETTDFMTADWYPFEHEFLKHVASRIVNEVEGVARVTYDITSKPPATVEWE.

A Glutamine amidotransferase type-1 domain is found at 13 to 202 (TILVLDFGSQ…AVEICQAAQT (190 aa)). Cysteine 89 functions as the Nucleophile in the catalytic mechanism. Active-site residues include histidine 176 and glutamate 178. One can recognise a GMPS ATP-PPase domain in the interval 203–400 (WTMENFIDTE…LGISHELVWR (198 aa)). Residue 231–237 (SGGVDST) coordinates ATP. XMP is bound by residues arginine 304, aspartate 462, lysine 517, and glutamate 523.

In terms of assembly, homodimer. It depends on Mg(2+) as a cofactor.

Its subcellular location is the cytoplasm. The protein resides in the cytosol. It catalyses the reaction XMP + L-glutamine + ATP + H2O = GMP + L-glutamate + AMP + diphosphate + 2 H(+). The protein operates within purine metabolism; GMP biosynthesis; GMP from XMP (L-Gln route): step 1/1. In terms of biological role, catalyzes the conversion of xanthine monophosphate (XMP) to GMP in the presence of glutamine and ATP through an adenyl-XMP intermediate. The chain is GMP synthase [glutamine-hydrolyzing] (GUA1) from Eremothecium gossypii (strain ATCC 10895 / CBS 109.51 / FGSC 9923 / NRRL Y-1056) (Yeast).